The following is a 49-amino-acid chain: Large ribosomal subunit protein bL32 (49 aa).

The protein belongs to the bacterial ribosomal protein bL32 family.

This is Large ribosomal subunit protein bL32 from Helicobacter hepaticus (strain ATCC 51449 / 3B1).